The chain runs to 461 residues: Ubiquinone hydroxylase UbiM (461 aa).

It belongs to the UbiH/COQ6 family. Requires FAD as cofactor.

It carries out the reaction a 2-(all-trans-polyprenyl)phenol + NADPH + O2 + H(+) = a 3-(all-trans-polyprenyl)benzene-1,2-diol + NADP(+) + H2O. The enzyme catalyses a 5-methoxy-2-methyl-3-(all-trans-polyprenyl)benzene-1,4-diol + AH2 + O2 = a 3-demethylubiquinol + A + H2O. It functions in the pathway cofactor biosynthesis; ubiquinone biosynthesis. Catalyzes the hydroxylation of three positions of the aromatic ring during ubiquinone biosynthesis. This Neisseria meningitidis serogroup C / serotype 2a (strain ATCC 700532 / DSM 15464 / FAM18) protein is Ubiquinone hydroxylase UbiM.